The chain runs to 511 residues: 2,3-bisphosphoglycerate-independent phosphoglycerate mutase (511 aa).

Mn(2+) is bound by residues aspartate 14 and serine 64. Catalysis depends on serine 64, which acts as the Phosphoserine intermediate. Residues histidine 125, 155 to 156 (RD), arginine 187, arginine 193, 259 to 262 (RADR), and lysine 333 each bind substrate. Residues aspartate 400, histidine 404, aspartate 441, histidine 442, and histidine 460 each contribute to the Mn(2+) site.

Belongs to the BPG-independent phosphoglycerate mutase family. In terms of assembly, monomer. Mn(2+) is required as a cofactor.

The enzyme catalyses (2R)-2-phosphoglycerate = (2R)-3-phosphoglycerate. The protein operates within carbohydrate degradation; glycolysis; pyruvate from D-glyceraldehyde 3-phosphate: step 3/5. Functionally, catalyzes the interconversion of 2-phosphoglycerate and 3-phosphoglycerate. This is 2,3-bisphosphoglycerate-independent phosphoglycerate mutase from Pseudomonas putida (strain GB-1).